A 148-amino-acid chain; its full sequence is uncharacterized protein (148 aa).

A signal peptide spans 1–35 (MRCVTRTRNWWRRAARMPRAGSSAWWVAVCKQVCT).

It localises to the secreted. This is an uncharacterized protein from Homo sapiens (Human).